The primary structure comprises 151 residues: 3-dehydroquinate dehydratase 1 (151 aa).

The Proton acceptor role is filled by Tyr-23. Asn-75, His-81, and Asp-88 together coordinate substrate. The active-site Proton donor is the His-101. Substrate contacts are provided by residues 102–103 (LS) and Arg-112.

This sequence belongs to the type-II 3-dehydroquinase family. Homododecamer.

The enzyme catalyses 3-dehydroquinate = 3-dehydroshikimate + H2O. It participates in metabolic intermediate biosynthesis; chorismate biosynthesis; chorismate from D-erythrose 4-phosphate and phosphoenolpyruvate: step 3/7. In terms of biological role, catalyzes a trans-dehydration via an enolate intermediate. In Pseudomonas putida (strain ATCC 47054 / DSM 6125 / CFBP 8728 / NCIMB 11950 / KT2440), this protein is 3-dehydroquinate dehydratase 1 (aroQ1).